The chain runs to 86 residues: Putative regulatory protein BBR47_37350 (86 aa).

Belongs to the RemA family.

In Brevibacillus brevis (strain 47 / JCM 6285 / NBRC 100599), this protein is Putative regulatory protein BBR47_37350.